Here is a 226-residue protein sequence, read N- to C-terminus: Ribonuclease 3 (226 aa).

Positions 5–127 constitute an RNase III domain; that stretch reads TFQRGDPIGH…IVAAIYLDCG (123 aa). Glutamate 40 is a Mg(2+) binding site. Aspartate 44 is an active-site residue. Mg(2+) contacts are provided by aspartate 113 and glutamate 116. Glutamate 116 is a catalytic residue. The DRBM domain occupies 154 to 224; sequence DPKTRLQEWL…ATLVIAQLDS (71 aa).

The protein belongs to the ribonuclease III family. In terms of assembly, homodimer. The cofactor is Mg(2+).

The protein localises to the cytoplasm. It catalyses the reaction Endonucleolytic cleavage to 5'-phosphomonoester.. Digests double-stranded RNA. Involved in the processing of primary rRNA transcript to yield the immediate precursors to the large and small rRNAs (23S and 16S). Processes some mRNAs, and tRNAs when they are encoded in the rRNA operon. Processes pre-crRNA and tracrRNA of type II CRISPR loci if present in the organism. In Xanthomonas axonopodis pv. citri (strain 306), this protein is Ribonuclease 3.